A 310-amino-acid polypeptide reads, in one-letter code: Acetyl-coenzyme A carboxylase carboxyl transferase subunit beta (310 aa).

The 270-residue stretch at 27–296 (LWKKCPKCSA…PEFENEEELE (270 aa)) folds into the CoA carboxyltransferase N-terminal domain. Positions 31, 34, 50, and 53 each coordinate Zn(2+). The C4-type zinc-finger motif lies at 31–53 (CPKCSAVLYRPELEKNLDVCPKC). A disordered region spans residues 285 to 310 (PEPEFENEEELEEEEMERPEPPDNVE). Over residues 287 to 310 (PEFENEEELEEEEMERPEPPDNVE) the composition is skewed to acidic residues.

Belongs to the AccD/PCCB family. Acetyl-CoA carboxylase is a heterohexamer composed of biotin carboxyl carrier protein (AccB), biotin carboxylase (AccC) and two subunits each of ACCase subunit alpha (AccA) and ACCase subunit beta (AccD). Zn(2+) serves as cofactor.

The protein resides in the cytoplasm. The catalysed reaction is N(6)-carboxybiotinyl-L-lysyl-[protein] + acetyl-CoA = N(6)-biotinyl-L-lysyl-[protein] + malonyl-CoA. Its pathway is lipid metabolism; malonyl-CoA biosynthesis; malonyl-CoA from acetyl-CoA: step 1/1. Component of the acetyl coenzyme A carboxylase (ACC) complex. Biotin carboxylase (BC) catalyzes the carboxylation of biotin on its carrier protein (BCCP) and then the CO(2) group is transferred by the transcarboxylase to acetyl-CoA to form malonyl-CoA. The chain is Acetyl-coenzyme A carboxylase carboxyl transferase subunit beta from Hahella chejuensis (strain KCTC 2396).